We begin with the raw amino-acid sequence, 185 residues long: Guanylate kinase (185 aa).

One can recognise a Guanylate kinase-like domain in the interval 3 to 181 (TRMIIVAAPS…SYGEFKKIVE (179 aa)). Residue 10–17 (APSGAGKS) participates in ATP binding.

The protein belongs to the guanylate kinase family.

It localises to the cytoplasm. It carries out the reaction GMP + ATP = GDP + ADP. In terms of biological role, essential for recycling GMP and indirectly, cGMP. In Bdellovibrio bacteriovorus (strain ATCC 15356 / DSM 50701 / NCIMB 9529 / HD100), this protein is Guanylate kinase.